Consider the following 168-residue polypeptide: Plastocyanin A, chloroplastic (168 aa).

Residues 1-69 constitute a chloroplast transit peptide; that stretch reads MATVTSAAVS…SAMIASNAMA (69 aa). In terms of domain architecture, Plastocyanin-like spans 70–168; the sequence is IDVLLGADDG…AGMVGKVTVN (99 aa). Residues histidine 106, cysteine 153, histidine 156, and methionine 161 each contribute to the Cu cation site.

Belongs to the plastocyanin family. Cu(2+) is required as a cofactor.

It localises to the plastid. The protein resides in the chloroplast thylakoid membrane. Functionally, participates in electron transfer between P700 and the cytochrome b6-f complex in photosystem I. This chain is Plastocyanin A, chloroplastic (PETE), found in Populus nigra (Lombardy poplar).